Consider the following 210-residue polypeptide: Large ribosomal subunit protein uL16 (210 aa).

The protein belongs to the universal ribosomal protein uL16 family. As to quaternary structure, component of the large ribosomal subunit. Mature ribosomes consist of a small (40S) and a large (60S) subunit. The 40S subunit contains about 33 different proteins and 1 molecule of RNA (18S). The 60S subunit contains about 49 different proteins and 3 molecules of RNA (28S, 5.8S and 5S).

It localises to the cytoplasm. Functionally, component of the large ribosomal subunit. Plays a role in the formation of actively translating ribosomes. Its function is as follows. (Microbial infection) Seems to bind to the leucine zipper of viral and cellular JUN. The protein is Large ribosomal subunit protein uL16 of Gallus gallus (Chicken).